A 577-amino-acid chain; its full sequence is Arginine--tRNA ligase (577 aa).

Residues 122 to 132 (PNVAKEMHVGH) carry the 'HIGH' region motif.

Belongs to the class-I aminoacyl-tRNA synthetase family. Monomer.

The protein resides in the cytoplasm. The enzyme catalyses tRNA(Arg) + L-arginine + ATP = L-arginyl-tRNA(Arg) + AMP + diphosphate. In Citrobacter koseri (strain ATCC BAA-895 / CDC 4225-83 / SGSC4696), this protein is Arginine--tRNA ligase.